A 66-amino-acid polypeptide reads, in one-letter code: Brevinin-1CDYd (66 aa).

Positions 1-22 (MFTLKKSLLILFFLGTINFSLC) are cleaved as a signal peptide. Positions 23-44 (EEERNAEEERRDDPEERDVEVE) are excised as a propeptide. The cysteines at positions 60 and 66 are disulfide-linked.

It belongs to the frog skin active peptide (FSAP) family. Brevinin subfamily. In terms of tissue distribution, expressed by the skin glands.

It is found in the secreted. Antimicrobial peptide. The sequence is that of Brevinin-1CDYd from Rana dybowskii (Dybovsky's frog).